Consider the following 181-residue polypeptide: MNKKSLLVVLVIALAVVPFAATAQTTPGQNQTAPNSSSPTVISQVDSITAITDYELRDGDLWIQFQSSGGNTLSITETAGSEGATQVRVRSVDIPRGTSTVTIDLFNSADGSVLITSRLSLEQNSGTVVSVSGGSAIISGPFTASDAQASGLGAAISVASVTLLLVFRASRGESTEGERIA.

The first 22 residues, 1–22 (MNKKSLLVVLVIALAVVPFAAT), serve as a signal peptide directing secretion.

This is an uncharacterized protein from Halorubrum pleomorphic virus 1 (HRPV-1).